Consider the following 385-residue polypeptide: D-alanine--D-alanine ligase (385 aa).

One can recognise an ATP-grasp domain in the interval 165–375; the sequence is KRVFTSFGLK…YPELVDRLVE (211 aa). An ATP-binding site is contributed by 201-256; that stretch reads AGEHGWPLFVKPARAGSSIGITKVDDLAGLDEAVAEAQRHDPKIIVEALLRGREIE. Mg(2+)-binding residues include aspartate 329, glutamate 342, and asparagine 344.

The protein belongs to the D-alanine--D-alanine ligase family. Mg(2+) serves as cofactor. The cofactor is Mn(2+).

It is found in the cytoplasm. It catalyses the reaction 2 D-alanine + ATP = D-alanyl-D-alanine + ADP + phosphate + H(+). It participates in cell wall biogenesis; peptidoglycan biosynthesis. In terms of biological role, cell wall formation. This chain is D-alanine--D-alanine ligase, found in Streptomyces avermitilis (strain ATCC 31267 / DSM 46492 / JCM 5070 / NBRC 14893 / NCIMB 12804 / NRRL 8165 / MA-4680).